A 396-amino-acid chain; its full sequence is MAKGKFERTKPHVNVGTIGHVDHGKTTLTAAIATVLSKKFGGEAKGYDQIDNAPEEKARGITINTSHVEYETATRHYAHVDCPGHADYVKNMITGAAQMDGAILVCSAADGPMPQTREHILLARQVGVPYIIVFLNKCDMVDDEELLELVEMEVRELLDKYDFPGDDTPIIRGSAKLALEGDQSDKGEPAILRLAEALDTYIPTPERAVDGAFLMPVEDVFSISGRGTVVTGRVERGIIKVGEEIEIVGIRDTQKTTVTGVEMFRKLLDQGQAGDNVGLLLRGTKREDVERGQVLCKPGSIKPHTHFTAEVYVLSKDEGGRHTPFFNNYRPQFYFRTTDVTGSIELPADKEMVMPGDNVSITVKLINPIAMEEGLRFAIREGGRTVGAGVVAKIIA.

The region spanning 10–206 is the tr-type G domain; it reads KPHVNVGTIG…ALDTYIPTPE (197 aa). The segment at 19–26 is G1; it reads GHVDHGKT. 19 to 26 contributes to the GTP binding site; sequence GHVDHGKT. Residue Thr26 participates in Mg(2+) binding. The tract at residues 60-64 is G2; the sequence is GITIN. The segment at 81-84 is G3; it reads DCPG. GTP contacts are provided by residues 81 to 85 and 136 to 139; these read DCPGH and NKCD. Residues 136-139 are G4; sequence NKCD. Positions 174-176 are G5; sequence SAK.

The protein belongs to the TRAFAC class translation factor GTPase superfamily. Classic translation factor GTPase family. EF-Tu/EF-1A subfamily. Monomer.

Its subcellular location is the cytoplasm. The catalysed reaction is GTP + H2O = GDP + phosphate + H(+). In terms of biological role, GTP hydrolase that promotes the GTP-dependent binding of aminoacyl-tRNA to the A-site of ribosomes during protein biosynthesis. This is Elongation factor Tu 2 from Acidovorax sp. (strain JS42).